The sequence spans 80 residues: Mu-conotoxin BuIIIC (80 aa).

An N-terminal signal peptide occupies residues 1–22 (MMSKLGVLLTICLLLFPLFALP). Positions 23–51 (QDGDQPADRPAERMQDDLSSEQHPLFEKR) are excised as a propeptide. 3 cysteine pairs are disulfide-bonded: C56-C70, C57-C76, and C66-C77. The residue at position 77 (C77) is a Cysteine amide.

The protein belongs to the conotoxin M superfamily. As to expression, expressed by the venom duct.

It localises to the secreted. Its function is as follows. Mu-conotoxins block voltage-gated sodium channels. Extremely potent inhibitor of Nav1.4/SCN4A (96% inhibition at 1 uM). The inhibition is very slowly reversible. This is Mu-conotoxin BuIIIC from Conus bullatus (Bubble cone).